The following is a 228-amino-acid chain: Triosephosphate isomerase (228 aa).

9–11 serves as a coordination point for substrate; sequence NFK. Residue H93 is the Electrophile of the active site. The active-site Proton acceptor is the E141. Residues I146, G180, and 201–202 contribute to the substrate site; that span reads AS.

The protein belongs to the triosephosphate isomerase family. In terms of assembly, homotetramer; dimer of dimers.

The protein resides in the cytoplasm. It catalyses the reaction D-glyceraldehyde 3-phosphate = dihydroxyacetone phosphate. The protein operates within carbohydrate biosynthesis; gluconeogenesis. It participates in carbohydrate degradation; glycolysis; D-glyceraldehyde 3-phosphate from glycerone phosphate: step 1/1. Involved in the gluconeogenesis. Catalyzes stereospecifically the conversion of dihydroxyacetone phosphate (DHAP) to D-glyceraldehyde-3-phosphate (G3P). This chain is Triosephosphate isomerase, found in Metallosphaera sedula (strain ATCC 51363 / DSM 5348 / JCM 9185 / NBRC 15509 / TH2).